Here is a 314-residue protein sequence, read N- to C-terminus: Atrochrysone carboxyl ACP thioesterase AgnL7 (314 aa).

Positions 103, 105, 107, and 108 each coordinate Zn(2+). D107 functions as the Proton donor/acceptor in the catalytic mechanism.

It belongs to the metallo-beta-lactamase superfamily. It depends on Zn(2+) as a cofactor.

It carries out the reaction atrochrysone carboxyl-[ACP] + H2O = atrochrysone carboxylate + holo-[ACP] + H(+). It functions in the pathway secondary metabolite biosynthesis. Its function is as follows. Atrochrysone carboxyl ACP thioesterase; part of the gene cluster that mediates the biosynthesis of agnestins, dihydroxy-xanthone metabolites. The pathway begins with the assembly and cyclization of atrochrysone thioester by the non-reducing polyketide synthase Agnpks1. The atrochrysone carboxyl ACP thioesterase AgnL7 then breaks the thioester bond and releases the atrochrysone carboxylic acid as the first enzyme-free intermediate. The decarboxylase AgnL1 then catalyzes the concerted decarboxylation-elimination required to convert atochrysone carboxylic acid into emodin anthrone, which is further oxidized to emodin by the anthrone oxygenase AgnL2. Emodin then undergoes reduction catalyzed by the oxidoreductase AgnL4 to yield the dihydroquinone tautomer which is the substrate for reduction by the short chain dehydrogenase AgnL6 reduction to produce hydroxyketone, followed by AgnL8 dehydration and likely spontaneous autoxidation to chrysophanol. Baeyer-Villiger oxidation by the oxidase AgnL3 leads to monodictyphenone via cleavage of the C-10/C-10a bond of chrysophanol. Alternative cleavage at the C-4a/C-10 bond of chrysophanol also leads to the formation some cephalone F. Further conversion to agnestins A and B, requires reduction to dihydro-monodictyphenone, oxidation to agnestin C probably via an epoxide, and rearrangement to either agnestin A or agnestin B directly, although agnestin A or agnestin B can also interconvert. Within the cluster, AgnR1 is the only unassigned oxidoreductase present which could be involved in this conversion. However, AgnR1 seems not to be involved in this step, and thus genes involved in the proposed oxidation/reduction may be located elsewhere on the genome. Further agnestin A derivatives are probably formed by spontaneous decarboxylations, dehydrations and methanolysis reactions. In Paecilomyces divaricatus (Penicillium divaricatum), this protein is Atrochrysone carboxyl ACP thioesterase AgnL7.